Reading from the N-terminus, the 51-residue chain is Cyclic phosphodiesterase (51 aa).

H11 serves as the catalytic Proton donor/acceptor. T13 is a substrate binding site. H38 functions as the Proton donor/acceptor in the catalytic mechanism. Substrate contacts are provided by S40 and Y43.

Belongs to the 2H phosphoesterase superfamily. CPD1 family.

Hydrolyzes ADP-ribose 1'',2''-cyclic phosphate (Appr&gt;1) that is produced during tRNA splicing into ADP-ribose 1''-phosphate (Appr-1''p). The sequence is that of Cyclic phosphodiesterase from Triticum aestivum (Wheat).